A 339-amino-acid chain; its full sequence is ATPase GET3 (339 aa).

ATP is bound at residue 37 to 44 (KGGVGKTT). Aspartate 66 is an active-site residue. The ATP site is built by glutamate 237 and asparagine 264. Residues cysteine 275 and cysteine 278 each contribute to the Zn(2+) site.

Belongs to the arsA ATPase family. In terms of assembly, homodimer.

It is found in the cytoplasm. It localises to the endoplasmic reticulum. ATPase required for the post-translational delivery of tail-anchored (TA) proteins to the endoplasmic reticulum. Recognizes and selectively binds the transmembrane domain of TA proteins in the cytosol. This complex then targets to the endoplasmic reticulum by membrane-bound receptors, where the tail-anchored protein is released for insertion. This process is regulated by ATP binding and hydrolysis. ATP binding drives the homodimer towards the closed dimer state, facilitating recognition of newly synthesized TA membrane proteins. ATP hydrolysis is required for insertion. Subsequently, the homodimer reverts towards the open dimer state, lowering its affinity for the membrane-bound receptor, and returning it to the cytosol to initiate a new round of targeting. The protein is ATPase GET3 of Rhodotorula glutinis (Yeast).